Here is a 797-residue protein sequence, read N- to C-terminus: LPS-assembly protein LptD (797 aa).

Positions 1–30 (MKEGRKRLRAGYCYMLAGVVGVASTGSSRA) are cleaved as a signal peptide.

Belongs to the LptD family. As to quaternary structure, component of the lipopolysaccharide transport and assembly complex. Interacts with LptE and LptA.

It localises to the cell outer membrane. Its function is as follows. Together with LptE, is involved in the assembly of lipopolysaccharide (LPS) at the surface of the outer membrane. This Hahella chejuensis (strain KCTC 2396) protein is LPS-assembly protein LptD.